We begin with the raw amino-acid sequence, 504 residues long: UDP-N-acetylmuramoylalanine--D-glutamate ligase (504 aa).

129–135 (GTNGKTT) contacts ATP.

Belongs to the MurCDEF family.

The protein resides in the cytoplasm. The catalysed reaction is UDP-N-acetyl-alpha-D-muramoyl-L-alanine + D-glutamate + ATP = UDP-N-acetyl-alpha-D-muramoyl-L-alanyl-D-glutamate + ADP + phosphate + H(+). The protein operates within cell wall biogenesis; peptidoglycan biosynthesis. Functionally, cell wall formation. Catalyzes the addition of glutamate to the nucleotide precursor UDP-N-acetylmuramoyl-L-alanine (UMA). The polypeptide is UDP-N-acetylmuramoylalanine--D-glutamate ligase (Burkholderia thailandensis (strain ATCC 700388 / DSM 13276 / CCUG 48851 / CIP 106301 / E264)).